Here is a 380-residue protein sequence, read N- to C-terminus: Erythronate-4-phosphate dehydrogenase (380 aa).

Residues S45 and T66 each coordinate substrate. Residues D146, T174, 205–207 (ASR), and D231 each bind NAD(+). The active site involves R207. E236 is a catalytic residue. H253 (proton donor) is an active-site residue. G256 is a binding site for NAD(+). Y257 contacts substrate.

Belongs to the D-isomer specific 2-hydroxyacid dehydrogenase family. PdxB subfamily. Homodimer.

The protein resides in the cytoplasm. It catalyses the reaction 4-phospho-D-erythronate + NAD(+) = (R)-3-hydroxy-2-oxo-4-phosphooxybutanoate + NADH + H(+). The protein operates within cofactor biosynthesis; pyridoxine 5'-phosphate biosynthesis; pyridoxine 5'-phosphate from D-erythrose 4-phosphate: step 2/5. In terms of biological role, catalyzes the oxidation of erythronate-4-phosphate to 3-hydroxy-2-oxo-4-phosphonooxybutanoate. The protein is Erythronate-4-phosphate dehydrogenase of Pseudomonas putida (strain W619).